Reading from the N-terminus, the 60-residue chain is Small ribosomal subunit protein eS31 (60 aa).

Zn(2+)-binding residues include cysteine 32, cysteine 35, cysteine 50, and cysteine 53. The C4-type zinc-finger motif lies at 32–53 (CPRCGAGVFMGEHKDRFSCGKC).

It belongs to the eukaryotic ribosomal protein eS31 family. Part of the 30S ribosomal subunit. Zn(2+) is required as a cofactor.

The polypeptide is Small ribosomal subunit protein eS31 (Methanocorpusculum labreanum (strain ATCC 43576 / DSM 4855 / Z)).